Reading from the N-terminus, the 232-residue chain is Phosphate-specific transport system accessory protein PhoU homolog 1 (232 aa).

This sequence belongs to the PhoU family. In terms of assembly, homodimer.

Its subcellular location is the cytoplasm. Its function is as follows. Plays a role in the regulation of phosphate uptake. This Thermotoga maritima (strain ATCC 43589 / DSM 3109 / JCM 10099 / NBRC 100826 / MSB8) protein is Phosphate-specific transport system accessory protein PhoU homolog 1 (phoU1).